Consider the following 224-residue polypeptide: 2,5-diamino-6-ribosylamino-4(3H)-pyrimidinone 5'-phosphate reductase (224 aa).

NADP(+) is bound by residues threonine 57, aspartate 61, 82–85 (STAN), valine 131, and 153–156 (GASI).

Belongs to the HTP reductase family. In terms of assembly, homodimer.

It catalyses the reaction 2,5-diamino-6-(1-D-ribitylamino)pyrimidin-4(3H)-one 5'-phosphate + NADP(+) = 2,5-diamino-6-(1-D-ribosylamino)pyrimidin-4(3H)-one 5'-phosphate + NADPH + H(+). It carries out the reaction 2,5-diamino-6-(1-D-ribitylamino)pyrimidin-4(3H)-one 5'-phosphate + NAD(+) = 2,5-diamino-6-(1-D-ribosylamino)pyrimidin-4(3H)-one 5'-phosphate + NADH + H(+). The protein operates within cofactor biosynthesis; riboflavin biosynthesis. Catalyzes an early step in riboflavin biosynthesis, the NADPH-dependent reduction of the ribose side chain of 2,5-diamino-6-ribosylamino-4(3H)-pyrimidinone 5'-phosphate, yielding 2,5-diamino-6-ribitylamino-4(3H)-pyrimidinone 5'-phosphate. This is 2,5-diamino-6-ribosylamino-4(3H)-pyrimidinone 5'-phosphate reductase (ribD2) from Aquifex aeolicus (strain VF5).